A 416-amino-acid chain; its full sequence is Gamma-glutamyl phosphate reductase (416 aa).

It belongs to the gamma-glutamyl phosphate reductase family.

Its subcellular location is the cytoplasm. The catalysed reaction is L-glutamate 5-semialdehyde + phosphate + NADP(+) = L-glutamyl 5-phosphate + NADPH + H(+). It participates in amino-acid biosynthesis; L-proline biosynthesis; L-glutamate 5-semialdehyde from L-glutamate: step 2/2. Functionally, catalyzes the NADPH-dependent reduction of L-glutamate 5-phosphate into L-glutamate 5-semialdehyde and phosphate. The product spontaneously undergoes cyclization to form 1-pyrroline-5-carboxylate. The chain is Gamma-glutamyl phosphate reductase from Salmonella heidelberg (strain SL476).